We begin with the raw amino-acid sequence, 876 residues long: Leucine--tRNA ligase (876 aa).

The 'HIGH' region signature appears at 42 to 52 (PYPSGKLHMGH). Positions 634–638 (KMSKS) match the 'KMSKS' region motif. Lys-637 contributes to the ATP binding site.

This sequence belongs to the class-I aminoacyl-tRNA synthetase family.

It localises to the cytoplasm. It catalyses the reaction tRNA(Leu) + L-leucine + ATP = L-leucyl-tRNA(Leu) + AMP + diphosphate. The polypeptide is Leucine--tRNA ligase (Neisseria meningitidis serogroup B (strain ATCC BAA-335 / MC58)).